Here is a 118-residue protein sequence, read N- to C-terminus: Holo-[acyl-carrier-protein] synthase (118 aa).

Mg(2+) is bound by residues Asp8 and Glu58.

Belongs to the P-Pant transferase superfamily. AcpS family. The cofactor is Mg(2+).

The protein resides in the cytoplasm. It carries out the reaction apo-[ACP] + CoA = holo-[ACP] + adenosine 3',5'-bisphosphate + H(+). Transfers the 4'-phosphopantetheine moiety from coenzyme A to a Ser of acyl-carrier-protein. The sequence is that of Holo-[acyl-carrier-protein] synthase from Listeria innocua serovar 6a (strain ATCC BAA-680 / CLIP 11262).